Reading from the N-terminus, the 144-residue chain is Large ribosomal subunit protein uL15 (144 aa).

The segment at 1–51 (MKLNELKPATGSRSKRLRKGRGLSSGHGFTSGRGTKGQKAHGKTRLGFEGG) is disordered. Residues 23 to 35 (LSSGHGFTSGRGT) are compositionally biased toward gly residues.

The protein belongs to the universal ribosomal protein uL15 family. Part of the 50S ribosomal subunit.

Functionally, binds to the 23S rRNA. This is Large ribosomal subunit protein uL15 from Limosilactobacillus reuteri (strain DSM 20016) (Lactobacillus reuteri).